Here is a 197-residue protein sequence, read N- to C-terminus: ATP-dependent Clp protease proteolytic subunit (197 aa).

Serine 100 serves as the catalytic Nucleophile. Residue histidine 125 is part of the active site.

The protein belongs to the peptidase S14 family. In terms of assembly, component of the chloroplastic Clp protease core complex.

The protein resides in the plastid. It is found in the chloroplast stroma. It carries out the reaction Hydrolysis of proteins to small peptides in the presence of ATP and magnesium. alpha-casein is the usual test substrate. In the absence of ATP, only oligopeptides shorter than five residues are hydrolyzed (such as succinyl-Leu-Tyr-|-NHMec, and Leu-Tyr-Leu-|-Tyr-Trp, in which cleavage of the -Tyr-|-Leu- and -Tyr-|-Trp bonds also occurs).. Functionally, cleaves peptides in various proteins in a process that requires ATP hydrolysis. Has a chymotrypsin-like activity. Plays a major role in the degradation of misfolded proteins. In Angiopteris evecta (Mule's foot fern), this protein is ATP-dependent Clp protease proteolytic subunit.